Reading from the N-terminus, the 609-residue chain is UvrABC system protein C (609 aa).

The region spanning 16–94 is the GIY-YIG domain; that stretch reads SSAGVYRMYD…IKQYMPKYNV (79 aa). A UVR domain is found at 203–238; it reads QQVISALVDKMELAAERQAYEQAARFRDQIMALRKV.

The protein belongs to the UvrC family. As to quaternary structure, interacts with UvrB in an incision complex.

It localises to the cytoplasm. The UvrABC repair system catalyzes the recognition and processing of DNA lesions. UvrC both incises the 5' and 3' sides of the lesion. The N-terminal half is responsible for the 3' incision and the C-terminal half is responsible for the 5' incision. The chain is UvrABC system protein C from Shewanella baltica (strain OS155 / ATCC BAA-1091).